We begin with the raw amino-acid sequence, 247 residues long: NAD(P)H-quinone oxidoreductase subunit K (247 aa).

C63, C64, C128, and C159 together coordinate [4Fe-4S] cluster.

It belongs to the complex I 20 kDa subunit family. NDH-1 can be composed of about 15 different subunits; different subcomplexes with different compositions have been identified which probably have different functions. [4Fe-4S] cluster serves as cofactor.

The protein resides in the cellular thylakoid membrane. It catalyses the reaction a plastoquinone + NADH + (n+1) H(+)(in) = a plastoquinol + NAD(+) + n H(+)(out). The catalysed reaction is a plastoquinone + NADPH + (n+1) H(+)(in) = a plastoquinol + NADP(+) + n H(+)(out). Its function is as follows. NDH-1 shuttles electrons from an unknown electron donor, via FMN and iron-sulfur (Fe-S) centers, to quinones in the respiratory and/or the photosynthetic chain. The immediate electron acceptor for the enzyme in this species is believed to be plastoquinone. Couples the redox reaction to proton translocation, and thus conserves the redox energy in a proton gradient. Cyanobacterial NDH-1 also plays a role in inorganic carbon-concentration. This Microcystis aeruginosa (strain NIES-843 / IAM M-2473) protein is NAD(P)H-quinone oxidoreductase subunit K.